Here is a 374-residue protein sequence, read N- to C-terminus: Dual-specificity RNA methyltransferase RlmN (374 aa).

Glutamate 94 functions as the Proton acceptor in the catalytic mechanism. The 240-residue stretch at 100–339 (EEDRATLCVS…VTIRKTRGDD (240 aa)) folds into the Radical SAM core domain. Cysteine 107 and cysteine 344 are joined by a disulfide. [4Fe-4S] cluster-binding residues include cysteine 114, cysteine 118, and cysteine 121. S-adenosyl-L-methionine contacts are provided by residues 168–169 (GE), serine 200, 222–224 (SLH), and asparagine 301. Residue cysteine 344 is the S-methylcysteine intermediate of the active site.

This sequence belongs to the radical SAM superfamily. RlmN family. Requires [4Fe-4S] cluster as cofactor.

It localises to the cytoplasm. The catalysed reaction is adenosine(2503) in 23S rRNA + 2 reduced [2Fe-2S]-[ferredoxin] + 2 S-adenosyl-L-methionine = 2-methyladenosine(2503) in 23S rRNA + 5'-deoxyadenosine + L-methionine + 2 oxidized [2Fe-2S]-[ferredoxin] + S-adenosyl-L-homocysteine. The enzyme catalyses adenosine(37) in tRNA + 2 reduced [2Fe-2S]-[ferredoxin] + 2 S-adenosyl-L-methionine = 2-methyladenosine(37) in tRNA + 5'-deoxyadenosine + L-methionine + 2 oxidized [2Fe-2S]-[ferredoxin] + S-adenosyl-L-homocysteine. Functionally, specifically methylates position 2 of adenine 2503 in 23S rRNA and position 2 of adenine 37 in tRNAs. m2A2503 modification seems to play a crucial role in the proofreading step occurring at the peptidyl transferase center and thus would serve to optimize ribosomal fidelity. This chain is Dual-specificity RNA methyltransferase RlmN, found in Vibrio vulnificus (strain YJ016).